Consider the following 430-residue polypeptide: Enolase (430 aa).

Q167 contributes to the (2R)-2-phosphoglycerate binding site. The Proton donor role is filled by E209. D245, E286, and D313 together coordinate Mg(2+). (2R)-2-phosphoglycerate-binding residues include K338, R367, S368, and K389. Catalysis depends on K338, which acts as the Proton acceptor.

The protein belongs to the enolase family. The cofactor is Mg(2+).

Its subcellular location is the cytoplasm. The protein localises to the secreted. It localises to the cell surface. It catalyses the reaction (2R)-2-phosphoglycerate = phosphoenolpyruvate + H2O. Its pathway is carbohydrate degradation; glycolysis; pyruvate from D-glyceraldehyde 3-phosphate: step 4/5. Catalyzes the reversible conversion of 2-phosphoglycerate (2-PG) into phosphoenolpyruvate (PEP). It is essential for the degradation of carbohydrates via glycolysis. This chain is Enolase, found in Parasynechococcus marenigrum (strain WH8102).